Reading from the N-terminus, the 476-residue chain is Rab-3A-interacting protein (476 aa).

Phosphoserine; by PKB/AKT1 occurs at positions 163 and 165. The stretch at 165–260 (SVLEVREKGY…EVAALKTLVL (96 aa)) forms a coiled coil. Residues 262 to 297 (SSPTSPTQEPLPGGKTPFKKGHTRNKSTSSAMSGSH) are disordered. Phosphoserine occurs at positions 263, 266, 288, and 296. The span at 287–297 (KSTSSAMSGSH) shows a compositional bias: polar residues. Positions 435-444 (TYIRYIQQGL) are important for RAB11A binding.

This sequence belongs to the SEC2 family. As to quaternary structure, homodimer. Interacts with the N-terminal region of SSX2. Interacts with the GDP-bound forms of RAB8A and RAB8B. The interaction with RAB8A is prevented by phosphorylation of RAB8A at 'Thr-72'. Interacts with the GDP-bound forms of RAB3A and RAB3D. Interacts with DCDC1. Interacts (via the N-terminal region) with TRAPPC14; this interaction mediates RAB3IP association with the TRAPP II complex. Forms a heterotetramer with RAB11A where RAB3IP homodimer binds two RAB11A subunits. Forms a complex with RAB11A and RAB11FIP3, probably a heterohexamer with two of each protein subunit, where Rabin8/RAB3IP and RAB11FIP3 simultaneously bind to RAB11A; the complex promotes preciliary trafficking. Forms a complex containing RAB11A, ASAP1, RAB3IP, RAP11FIP3 and ARF4; the complex promotes preciliary trafficking; the complex binds to RHO in photoreceptor cells and promotes RHO ciliary transport. In terms of processing, phosphorylated by AKT1; the phosphorylation alters its GEF activity. As to expression, expressed in brain, kidney, heart, pancreas and placenta. Not detected in skeletal muscle or liver.

It is found in the cytoplasm. The protein localises to the nucleus. The protein resides in the cytoskeleton. Its subcellular location is the cell projection. It localises to the lamellipodium. It is found in the vesicle. The protein localises to the microtubule organizing center. The protein resides in the centrosome. Phosphorylation by ATK1 alters its GEF activity. Complex formation with RAB11A and RAB11FIP3 and ciliogenesis function are competitively inhibited by RAB11A-WDR44 interaction. In terms of biological role, guanine nucleotide exchange factor (GEF) which may activate RAB8A and RAB8B. Promotes the exchange of GDP to GTP, converting inactive GDP-bound Rab proteins into their active GTP-bound form. Mediates the release of GDP from RAB8A and RAB8B but not from RAB3A or RAB5. Modulates actin organization and promotes polarized transport of RAB8A-specific vesicles to the cell surface. Together with RAB11A, RAB8A, the exocyst complex, PARD3, PRKCI, ANXA2, CDC42 and DNMBP promotes transcytosis of PODXL to the apical membrane initiation sites (AMIS), apical surface formation and lumenogenesis. Part of the ciliary targeting complex containing Rab11, ASAP1, RAB3IP and RAB11FIP3 and ARF4 that promotes RAB3IP preciliary vesicle trafficking to mother centriole and ciliogenesis initiation. The sequence is that of Rab-3A-interacting protein from Homo sapiens (Human).